Here is a 262-residue protein sequence, read N- to C-terminus: Small ribosomal subunit protein uS3 (262 aa).

The region spanning 38 to 106 (LRKIIAKELE…KVKLNIQEIH (69 aa)) is the KH type-2 domain. Residues 211–262 (KGQTQLPQPAVAAARPGLTVEEEERPQRKGGRGGRGANAGAARGGRGGRSRS) form a disordered region. The segment covering 243–255 (GGRGANAGAARGG) has biased composition (gly residues).

This sequence belongs to the universal ribosomal protein uS3 family. In terms of assembly, part of the 30S ribosomal subunit. Forms a tight complex with proteins S10 and S14.

In terms of biological role, binds the lower part of the 30S subunit head. Binds mRNA in the 70S ribosome, positioning it for translation. In Roseiflexus sp. (strain RS-1), this protein is Small ribosomal subunit protein uS3.